Consider the following 370-residue polypeptide: Homoserine O-acetyltransferase (370 aa).

The region spanning 44-350 (NAILVAHAWT…AYGHDAFLLE (307 aa)) is the AB hydrolase-1 domain. The active-site Nucleophile is S150. Position 217 (R217) interacts with substrate. Active-site residues include D311 and H344. Residue D345 participates in substrate binding.

Belongs to the AB hydrolase superfamily. MetX family. As to quaternary structure, homodimer.

It is found in the cytoplasm. The enzyme catalyses L-homoserine + acetyl-CoA = O-acetyl-L-homoserine + CoA. It functions in the pathway amino-acid biosynthesis; L-methionine biosynthesis via de novo pathway; O-acetyl-L-homoserine from L-homoserine: step 1/1. In terms of biological role, transfers an acetyl group from acetyl-CoA to L-homoserine, forming acetyl-L-homoserine. The sequence is that of Homoserine O-acetyltransferase from Geotalea uraniireducens (strain Rf4) (Geobacter uraniireducens).